The sequence spans 262 residues: 14-3-3 protein homolog (262 aa).

It belongs to the 14-3-3 family.

This Trichoderma harzianum (Hypocrea lixii) protein is 14-3-3 protein homolog.